The following is a 510-amino-acid chain: NAD(P)H-quinone oxidoreductase subunit 2 A, chloroplastic (510 aa).

14 helical membrane-spanning segments follow: residues 31–51 (FIFP…IDLT), 59–79 (WFYF…LFRW), 99–119 (IFQF…VEYI), 124–144 (MAIT…MFLC), 149–169 (LITI…LSGY), 184–204 (LLMG…LYGL), 229–249 (ISIA…LAPF), 261–281 (PTPV…ALAT), 295–315 (WHLL…LLAI), 323–343 (MLAY…IVGD), 354–374 (YMLF…LFGL), 395–415 (ALSL…AGFF), 418–438 (LYLF…IGLL), and 484–504 (MTVC…ILAI).

It belongs to the complex I subunit 2 family. As to quaternary structure, NDH is composed of at least 16 different subunits, 5 of which are encoded in the nucleus.

The protein localises to the plastid. Its subcellular location is the chloroplast thylakoid membrane. The catalysed reaction is a plastoquinone + NADH + (n+1) H(+)(in) = a plastoquinol + NAD(+) + n H(+)(out). It carries out the reaction a plastoquinone + NADPH + (n+1) H(+)(in) = a plastoquinol + NADP(+) + n H(+)(out). Its function is as follows. NDH shuttles electrons from NAD(P)H:plastoquinone, via FMN and iron-sulfur (Fe-S) centers, to quinones in the photosynthetic chain and possibly in a chloroplast respiratory chain. The immediate electron acceptor for the enzyme in this species is believed to be plastoquinone. Couples the redox reaction to proton translocation, and thus conserves the redox energy in a proton gradient. The sequence is that of NAD(P)H-quinone oxidoreductase subunit 2 A, chloroplastic from Saccharum hybrid (Sugarcane).